The sequence spans 145 residues: Histone H2B.1, sperm (145 aa).

A disordered region spans residues 1 to 52 (MPSQKSPTKRSPTKRSPTKRSPQKGGKGGKGAKRGGKAGKRRRGVQVKRRRR). 4 consecutive short sequence motifs (SPKK motif) follow at residues 6 to 9 (SPTK), 11 to 14 (SPTK), 16 to 19 (SPTK), and 21 to 24 (SPQK). Basic residues-rich tracts occupy residues 7 to 22 (PTKRSPTKRSPTKRSP) and 30 to 52 (KGAKRGGKAGKRRRGVQVKRRRR). Residues Ser-16 and Ser-21 each carry the phosphoserine modification. O-linked (GlcNAc) serine glycosylation occurs at Ser-132. Lys-140 participates in a covalent cross-link: Glycyl lysine isopeptide (Lys-Gly) (interchain with G-Cter in ubiquitin).

It belongs to the histone H2B family. In terms of assembly, the nucleosome is a histone octamer containing two molecules each of H2A, H2B, H3 and H4 assembled in one H3-H4 heterotetramer and two H2A-H2B heterodimers. The octamer wraps approximately 147 bp of DNA. Monoubiquitination of Lys-140 gives a specific tag for epigenetic transcriptional activation and is also prerequisite for histone H3 'Lys-4' and 'Lys-79' methylation. In terms of processing, phosphorylated on SPKK motifs 3 and 4; which may regulate DNA binding. Dephosphorylated during maturation of spermatids to mature sperm and rephosphorylated at fertilization. Post-translationally, glcNAcylation at Ser-132 promotes monoubiquitination of Lys-140. It fluctuates in response to extracellular glucose, and associates with transcribed genes.

The protein localises to the nucleus. Its subcellular location is the chromosome. Core component of nucleosome. Nucleosomes wrap and compact DNA into chromatin, limiting DNA accessibility to the cellular machineries which require DNA as a template. Histones thereby play a central role in transcription regulation, DNA repair, DNA replication and chromosomal stability. DNA accessibility is regulated via a complex set of post-translational modifications of histones, also called histone code, and nucleosome remodeling. This is Histone H2B.1, sperm from Parechinus angulosus (Angulate sea urchin).